A 149-amino-acid polypeptide reads, in one-letter code: Protein FAM72A (149 aa).

The protein belongs to the FAM72 family. Interacts with UNG. As to expression, expressed at high levels in stomach and also in kidney and, at low levels, in heart (at protein level). In the stomach, highly expressed in foveolar cells, parietal cells and chief cells (at protein level). In kidney, expressed in endothelial cells, mesangial and epithelial cells (parietal and visceral epithelium) around glomerulus (at protein level).

The protein resides in the cytoplasm. The protein localises to the mitochondrion. Functionally, may play a role in the regulation of cellular reactive oxygen species metabolism. May participate in cell growth regulation. The protein is Protein FAM72A (FAM72A) of Bos taurus (Bovine).